The primary structure comprises 387 residues: MHRGRSASARQERDFRALMDLAHGFMASQVLFAGCALRVFDAAALGPVDAAALARSSGLSPRGTRLLLDACAGLGLLRRRRGAGPRGPAYTNSPLASTFLVAGSPLSQRSLLLYLAGTTYLCWGHLADGVREGRSQYARAVGVDADDPFTAIYRSEAERLLFMRGLQETWSLCGGRVLAAFDLSPFRVICDLGGGSGALARMAARLYPGSEVTVFETPDVVAAARAHFPPPADEDGAEPRVRFLSGDFFRSPLPPADLYVLARVLHDWADAACVELLRRVRGALRPGGAVLLVESVLSPGGAGPTRTLLLSLTMLLQARGRERTEAEYRALTARAGFSRLRLRRPRGPYHAMMAARGGGAGARSDGGGGEATSQTGSGTGREVGAQD.

S-adenosyl-L-methionine contacts are provided by residues Tyr153, Trp170, Glu216, 246 to 248 (GDF), and Arg263. His266 functions as the Proton donor/acceptor in the catalytic mechanism. Substrate contacts are provided by Asp267 and Gln317. Positions 355–387 (ARGGGAGARSDGGGGEATSQTGSGTGREVGAQD) are disordered. A compositionally biased stretch (gly residues) spans 356-370 (RGGGAGARSDGGGGE).

This sequence belongs to the class I-like SAM-binding methyltransferase superfamily. Cation-independent O-methyltransferase family. As to quaternary structure, homodimer.

The catalysed reaction is N-acetylserotonin + S-adenosyl-L-methionine = melatonin + S-adenosyl-L-homocysteine + H(+). Its pathway is aromatic compound metabolism; melatonin biosynthesis; melatonin from serotonin: step 1/2. Functionally, catalyzes the transfer of a methyl group onto N-acetylserotonin, producing melatonin (N-acetyl-5-methoxytryptamine). The chain is Acetylserotonin O-methyltransferase (Asmt) from Mus musculus molossinus (Japanese house mouse).